Here is a 120-residue protein sequence, read N- to C-terminus: UPF0295 protein Exig_0660 (120 aa).

2 consecutive transmembrane segments (helical) span residues 16 to 36 (AMFL…LKQF) and 41 to 61 (VILM…YFLI).

This sequence belongs to the UPF0295 family.

The protein resides in the cell membrane. The sequence is that of UPF0295 protein Exig_0660 from Exiguobacterium sibiricum (strain DSM 17290 / CCUG 55495 / CIP 109462 / JCM 13490 / 255-15).